Reading from the N-terminus, the 718-residue chain is Polyribonucleotide nucleotidyltransferase (718 aa).

2 residues coordinate Mg(2+): aspartate 497 and aspartate 503. A KH domain is found at 564–623 (PRLLTMKIDPEQIGLVIGPGGKTIKGITEQTGSKIDIADDGTVTIAALEAEKAEKAKQII). An S1 motif domain is found at 633-701 (GEVYMGRVTR…AKGRLNLTRL (69 aa)).

Belongs to the polyribonucleotide nucleotidyltransferase family. It depends on Mg(2+) as a cofactor.

It localises to the cytoplasm. The enzyme catalyses RNA(n+1) + phosphate = RNA(n) + a ribonucleoside 5'-diphosphate. Functionally, involved in mRNA degradation. Catalyzes the phosphorolysis of single-stranded polyribonucleotides processively in the 3'- to 5'-direction. In Rippkaea orientalis (strain PCC 8801 / RF-1) (Cyanothece sp. (strain PCC 8801)), this protein is Polyribonucleotide nucleotidyltransferase.